The sequence spans 245 residues: Probable ABC transporter permease protein HI_0355 (245 aa).

The next 6 helical transmembrane spans lie at 9 to 29 (LLIV…GSFP), 61 to 81 (ICLG…LLSF), 92 to 112 (ILVI…VLWF), 115 to 135 (GMAS…TAAC), 170 to 190 (LPAF…GAVV), and 217 to 237 (FAAL…IDWL). Residues 50-234 (LWQHTQVTLL…SISLCLYFSI (185 aa)) form the ABC transmembrane type-1 domain.

The protein belongs to the binding-protein-dependent transport system permease family. CysTW subfamily.

It is found in the cell inner membrane. Probably part of a binding-protein-dependent transport system. Probably responsible for the translocation of the substrate across the membrane. The sequence is that of Probable ABC transporter permease protein HI_0355 from Haemophilus influenzae (strain ATCC 51907 / DSM 11121 / KW20 / Rd).